A 278-amino-acid chain; its full sequence is Release factor glutamine methyltransferase (278 aa).

Residues 117-121, Asp140, and Asn184 each bind S-adenosyl-L-methionine; that span reads GTGSG. Position 184-187 (184-187) interacts with substrate; sequence NPPY.

It belongs to the protein N5-glutamine methyltransferase family. PrmC subfamily.

It carries out the reaction L-glutaminyl-[peptide chain release factor] + S-adenosyl-L-methionine = N(5)-methyl-L-glutaminyl-[peptide chain release factor] + S-adenosyl-L-homocysteine + H(+). Functionally, methylates the class 1 translation termination release factors RF1/PrfA and RF2/PrfB on the glutamine residue of the universally conserved GGQ motif. The sequence is that of Release factor glutamine methyltransferase from Staphylococcus aureus (strain NCTC 8325 / PS 47).